The chain runs to 205 residues: Purine catabolism protein PucB (205 aa).

The protein operates within purine metabolism; hypoxanthine degradation. Required for xanthine dehydrogenase activity. Could be involved in formation of the molybdenum cofactor required by xanthine dehydrogenase. This chain is Purine catabolism protein PucB (pucB), found in Bacillus subtilis (strain 168).